The following is a 140-amino-acid chain: Large-conductance mechanosensitive channel 3 (140 aa).

The next 3 membrane-spanning stretches (helical) occupy residues 8–28 (FISKGNVMDLAVGVIIGAAFG), 30–50 (IVTSLVDDVIMPIFGAIFGGL), and 81–101 (GSFITAVLNFLILAFIIFLMV).

The protein belongs to the MscL family. In terms of assembly, homopentamer.

The protein resides in the cell inner membrane. Channel that opens in response to stretch forces in the membrane lipid bilayer. May participate in the regulation of osmotic pressure changes within the cell. The chain is Large-conductance mechanosensitive channel 3 from Mesorhizobium japonicum (strain LMG 29417 / CECT 9101 / MAFF 303099) (Mesorhizobium loti (strain MAFF 303099)).